Reading from the N-terminus, the 117-residue chain is UPF0122 protein TTE1463 (117 aa).

It belongs to the UPF0122 family.

Its function is as follows. Might take part in the signal recognition particle (SRP) pathway. This is inferred from the conservation of its genetic proximity to ftsY/ffh. May be a regulatory protein. This Caldanaerobacter subterraneus subsp. tengcongensis (strain DSM 15242 / JCM 11007 / NBRC 100824 / MB4) (Thermoanaerobacter tengcongensis) protein is UPF0122 protein TTE1463.